Reading from the N-terminus, the 266-residue chain is Eukaryotic translation initiation factor 3 subunit J (266 aa).

2 disordered regions span residues 1 to 142 (MAPS…VSDS) and 215 to 243 (MSNE…VSLV). Residues 26 to 44 (DEEEEDVLDSWDAAEDSEV) are compositionally biased toward acidic residues. Residues 40 to 99 (EDSEVEREKAAKAAEAKAKAEAEAAAKKKSKAQRIQEHKEERKKREEEDSSSESEEDEAE) are a coiled coil. Composition is skewed to basic and acidic residues over residues 45-65 (EREK…EAAA) and 73-86 (RIQE…KREE). Residues 87 to 97 (EDSSSESEEDE) are compositionally biased toward acidic residues. Composition is skewed to basic and acidic residues over residues 98 to 118 (AERR…HAED) and 218 to 230 (EKMR…DKGN).

It belongs to the eIF-3 subunit J family. In terms of assembly, component of the eukaryotic translation initiation factor 3 (eIF-3) complex.

It localises to the cytoplasm. Component of the eukaryotic translation initiation factor 3 (eIF-3) complex, which is involved in protein synthesis of a specialized repertoire of mRNAs and, together with other initiation factors, stimulates binding of mRNA and methionyl-tRNAi to the 40S ribosome. The eIF-3 complex specifically targets and initiates translation of a subset of mRNAs involved in cell proliferation. This is Eukaryotic translation initiation factor 3 subunit J (hcr1) from Aspergillus terreus (strain NIH 2624 / FGSC A1156).